A 470-amino-acid chain; its full sequence is Cupincin (470 aa).

An N-terminal signal peptide occupies residues methionine 1–tryptophan 34. Basic and acidic residues predominate over residues arginine 36 to glutamate 52. Disordered stretches follow at residues arginine 36–tyrosine 57 and lysine 240–leucine 261. 2 consecutive Cupin type-1 domains span residues tyrosine 57–glutamate 215 and serine 259–alanine 445. N-linked (GlcNAc...) asparagine glycosylation is present at asparagine 297. Residues proline 330 to arginine 368 form a disordered region. Residues serine 338–alanine 367 show a composition bias toward basic and acidic residues. Histidine 347, glutamate 352, and histidine 360 together coordinate Zn(2+).

This sequence belongs to the 7S seed storage protein family. In terms of assembly, homotrimer. Zn(2+) is required as a cofactor.

It localises to the secreted. In terms of biological role, seed storage protein. Globulin-like protein that acts as a zinc metalloprotease. Cleaves specifically between Leu-15 and Tyr-16 of insulin B chain, and Gln-1 and Leu-2 of neurotensin (NT) peptide in vitro. May play a role as an initiating endopeptidase in germinating seeds. In Oryza sativa subsp. indica (Rice), this protein is Cupincin.